The chain runs to 128 residues: Large ribosomal subunit protein bL12 (128 aa).

Belongs to the bacterial ribosomal protein bL12 family. As to quaternary structure, homodimer. Part of the ribosomal stalk of the 50S ribosomal subunit. Forms a multimeric L10(L12)X complex, where L10 forms an elongated spine to which 2 to 4 L12 dimers bind in a sequential fashion. Binds GTP-bound translation factors.

In terms of biological role, forms part of the ribosomal stalk which helps the ribosome interact with GTP-bound translation factors. Is thus essential for accurate translation. In Trichormus variabilis (strain ATCC 29413 / PCC 7937) (Anabaena variabilis), this protein is Large ribosomal subunit protein bL12.